We begin with the raw amino-acid sequence, 317 residues long: Metaxin-1 (317 aa).

Residues K38, K41, and K78 each participate in a glycyl lysine isopeptide (Lys-Gly) (interchain with G-Cter in ubiquitin) cross-link. The chain crosses the membrane as a helical span at residues 164-184 (EELEKELYQEAQECLTLLSQR).

Belongs to the metaxin family. As to quaternary structure, interacts with MTX2/metaxin-2. Associates with the mitochondrial contact site and cristae organizing system (MICOS) complex, composed of at least MICOS10/MIC10, CHCHD3/MIC19, CHCHD6/MIC25, APOOL/MIC27, IMMT/MIC60, APOO/MIC23/MIC26 and QIL1/MIC13. This complex was also known under the names MINOS or MitOS complex. The MICOS complex associates with mitochondrial outer membrane proteins SAMM50, MTX1 and MTX2 (together described as components of the mitochondrial outer membrane sorting assembly machinery (SAM) complex) and DNAJC11, mitochondrial inner membrane protein TMEM11 and with HSPA9. The MICOS and SAM complexes together with DNAJC11 are part of a large protein complex spanning both membranes termed the mitochondrial intermembrane space bridging (MIB) complex. Interacts with ARMC1. Post-translationally, ubiquitinated by PRKN during mitophagy, leading to its degradation and enhancement of mitophagy. Deubiquitinated by USP30.

The protein localises to the mitochondrion outer membrane. In terms of biological role, involved in transport of proteins into the mitochondrion. Essential for embryonic development. This Bos taurus (Bovine) protein is Metaxin-1 (MTX1).